The chain runs to 656 residues: Putative L-type lectin-domain containing receptor kinase V.2 (656 aa).

The signal sequence occupies residues 1–23 (MSLLLKMLLFSLFFFYMASISQC). Over 24-276 (SDPTGGQFSF…EDQERSLSSK (253 aa)) the chain is Extracellular. A legume-lectin like region spans residues 29–248 (GQFSFNGYLY…SHYILGWSFN (220 aa)). N-linked (GlcNAc...) asparagine glycans are attached at residues asparagine 78, asparagine 124, asparagine 159, asparagine 190, and asparagine 257. A helical transmembrane segment spans residues 277–297 (ILAISLSISGVTLVIVLILGV). Topologically, residues 298–656 (MLFLKRKKFL…MTESFLSSGR (359 aa)) are cytoplasmic. Positions 334-615 (FKNSEVLGKG…GVATLPHNLL (282 aa)) constitute a Protein kinase domain. Residues 340 to 348 (LGKGGFGKV) and lysine 363 each bind ATP. Catalysis depends on aspartate 459, which acts as the Proton acceptor.

In the C-terminal section; belongs to the protein kinase superfamily. Ser/Thr protein kinase family. This sequence in the N-terminal section; belongs to the leguminous lectin family.

The protein localises to the cell membrane. The enzyme catalyses L-seryl-[protein] + ATP = O-phospho-L-seryl-[protein] + ADP + H(+). The catalysed reaction is L-threonyl-[protein] + ATP = O-phospho-L-threonyl-[protein] + ADP + H(+). This is Putative L-type lectin-domain containing receptor kinase V.2 (LECRK52) from Arabidopsis thaliana (Mouse-ear cress).